The chain runs to 356 residues: Holliday junction branch migration complex subunit RuvB (356 aa).

Residues 4–191 form a large ATPase domain (RuvB-L) region; it reads TDKLATEQRI…FGIVARLEFY (188 aa). ATP contacts are provided by residues leucine 30, arginine 31, glycine 72, lysine 75, threonine 76, threonine 77, 138–140, arginine 181, tyrosine 191, and arginine 228; that span reads EDY. Threonine 76 is a binding site for Mg(2+). Residues 192-262 form a small ATPAse domain (RuvB-S) region; it reads DAEQLSRIVR…VADAALAMLD (71 aa). Residues 265–356 are head domain (RuvB-H); the sequence is PVGFDLMDRK…RGEWDTPDGK (92 aa). Arginine 301, arginine 320, and arginine 325 together coordinate DNA.

The protein belongs to the RuvB family. In terms of assembly, homohexamer. Forms an RuvA(8)-RuvB(12)-Holliday junction (HJ) complex. HJ DNA is sandwiched between 2 RuvA tetramers; dsDNA enters through RuvA and exits via RuvB. An RuvB hexamer assembles on each DNA strand where it exits the tetramer. Each RuvB hexamer is contacted by two RuvA subunits (via domain III) on 2 adjacent RuvB subunits; this complex drives branch migration. In the full resolvosome a probable DNA-RuvA(4)-RuvB(12)-RuvC(2) complex forms which resolves the HJ.

Its subcellular location is the cytoplasm. The catalysed reaction is ATP + H2O = ADP + phosphate + H(+). In terms of biological role, the RuvA-RuvB-RuvC complex processes Holliday junction (HJ) DNA during genetic recombination and DNA repair, while the RuvA-RuvB complex plays an important role in the rescue of blocked DNA replication forks via replication fork reversal (RFR). RuvA specifically binds to HJ cruciform DNA, conferring on it an open structure. The RuvB hexamer acts as an ATP-dependent pump, pulling dsDNA into and through the RuvAB complex. RuvB forms 2 homohexamers on either side of HJ DNA bound by 1 or 2 RuvA tetramers; 4 subunits per hexamer contact DNA at a time. Coordinated motions by a converter formed by DNA-disengaged RuvB subunits stimulates ATP hydrolysis and nucleotide exchange. Immobilization of the converter enables RuvB to convert the ATP-contained energy into a lever motion, pulling 2 nucleotides of DNA out of the RuvA tetramer per ATP hydrolyzed, thus driving DNA branch migration. The RuvB motors rotate together with the DNA substrate, which together with the progressing nucleotide cycle form the mechanistic basis for DNA recombination by continuous HJ branch migration. Branch migration allows RuvC to scan DNA until it finds its consensus sequence, where it cleaves and resolves cruciform DNA. This Burkholderia lata (strain ATCC 17760 / DSM 23089 / LMG 22485 / NCIMB 9086 / R18194 / 383) protein is Holliday junction branch migration complex subunit RuvB.